A 261-amino-acid polypeptide reads, in one-letter code: Zinc finger protein 664 (261 aa).

9 C2H2-type zinc fingers span residues 3 to 25 (YKCP…QKIH), 31 to 53 (HKCD…WRDH), 59 to 81 (YKCD…KKIH), 87 to 109 (YKCY…MRVH), 115 to 137 (YVCS…QRVH), 143 to 165 (FKCE…QRVH), 171 to 193 (YKCY…QRVH), 199 to 221 (YRCC…QRVH), and 227 to 249 (FKCD…QRVH). Residue K257 forms a Glycyl lysine isopeptide (Lys-Gly) (interchain with G-Cter in SUMO2) linkage.

The protein belongs to the krueppel C2H2-type zinc-finger protein family.

The protein localises to the nucleus. In terms of biological role, may be involved in transcriptional regulation. This is Zinc finger protein 664 (Znf664) from Mus musculus (Mouse).